The primary structure comprises 390 residues: MAQSFKRVFLVVMDSVGIGEAPDAEQFGDLGAHTLGHIAEQRNGLNMPHLAQLGLSHIEPVQGVSADAAPIASFGKMEEVSAGKDTMTGHWEIMGLRIDTPFRVFEKFPEDLIGRLETFSGRKIIGNKPASGTEILDELGQEHVDTGALIVYTSADSVLQIAAHEEVVPLEELYRICEYARDITRDDPYMLGRIIARPFLGEQGAWVRTSNRHDYALKPFDRTVMNELETAGLDVISLGKIADIFDGEGVTDAIRTKSNMDGMDQLVKQLDRDFTGLCFLNLVDFDALFGHRRDPQGYGQALEEFDARLLEVFERLQEDDLLIITADHGNDPVHPGTDHTREYVPLLVYSKSGAAKDLGIRSTFADLGATVADNFNVKMPAHGKSFLSEL.

Mn(2+) is bound by residues Asp14, Asp286, His291, Asp327, His328, and His339.

It belongs to the phosphopentomutase family. Mn(2+) serves as cofactor.

It is found in the cytoplasm. It catalyses the reaction 2-deoxy-alpha-D-ribose 1-phosphate = 2-deoxy-D-ribose 5-phosphate. The catalysed reaction is alpha-D-ribose 1-phosphate = D-ribose 5-phosphate. It participates in carbohydrate degradation; 2-deoxy-D-ribose 1-phosphate degradation; D-glyceraldehyde 3-phosphate and acetaldehyde from 2-deoxy-alpha-D-ribose 1-phosphate: step 1/2. Its function is as follows. Isomerase that catalyzes the conversion of deoxy-ribose 1-phosphate (dRib-1-P) and ribose 1-phosphate (Rib-1-P) to deoxy-ribose 5-phosphate (dRib-5-P) and ribose 5-phosphate (Rib-5-P), respectively. This is Phosphopentomutase from Exiguobacterium sibiricum (strain DSM 17290 / CCUG 55495 / CIP 109462 / JCM 13490 / 255-15).